The primary structure comprises 162 residues: Peptide deformylase-like (162 aa).

This sequence belongs to the polypeptide deformylase family.

This chain is Peptide deformylase-like, found in Staphylococcus aureus (strain COL).